A 704-amino-acid chain; its full sequence is Arylphorin (704 aa).

The first 16 residues, 1-16 (MKIVLVLAGLIALVQS), serve as a signal peptide directing secretion. 3 N-linked (GlcNAc...) asparagine glycosylation sites follow: Asn73, Asn212, and Asn360.

The protein belongs to the hemocyanin family. In terms of assembly, homohexamer of two stacked trimers; disulfide-linked. In terms of processing, glycosylation at Asn-360 is required for proper folding.

The protein resides in the secreted. Its subcellular location is the extracellular space. Its function is as follows. Arylphorin is a larval storage protein (LSP) which may serve as a storage protein used primarily as a source of aromatic amino acids for protein synthesis during metamorphosis. It is a constituent of the sclerotizing system of the cuticle, and serves as a carrier for ecdysteroid hormone. The polypeptide is Arylphorin (Antheraea pernyi (Chinese oak silk moth)).